The sequence spans 926 residues: Tyrosine-protein phosphatase non-receptor type 4 (926 aa).

The 284-residue stretch at 29 to 312 (VVCNILLLDN…EHHTFFRLDR (284 aa)) folds into the FERM domain. Disordered regions lie at residues 380–412 (DDRL…TRLR) and 430–475 (EVFV…KNSW). 2 stretches are compositionally biased toward polar residues: residues 398-408 (NHRNSTFTQEG) and 430-456 (EVFV…SQET). A Phosphoserine modification is found at S474. Residues 517–589 (LIRMKPDENG…DQVVLFIKAS (73 aa)) enclose the PDZ domain. Positions 655 to 911 (VLTQFDQLYR…RFVCEAILKV (257 aa)) constitute a Tyrosine-protein phosphatase domain. Substrate is bound by residues D820, 852–858 (CSAGIGR), and Q896. C852 acts as the Phosphocysteine intermediate in catalysis.

Belongs to the protein-tyrosine phosphatase family. Non-receptor class subfamily. In terms of assembly, interacts with MAPK12 (via C-terminus); this interaction abolishes PTPN4 catalytic autoinhibition and thus activates the phosphatase activity. As to quaternary structure, (Microbial infection) Interacts with attenuated rabies virus protein G; this interaction is required for virally-induced apoptosis. Post-translationally, highly phosphorylated on serine and threonine residues but not on tyrosines. Cleaved and activated by calpain I/CAPN1.

The protein resides in the cell membrane. It localises to the cytoplasm. The protein localises to the cytoskeleton. It carries out the reaction O-phospho-L-tyrosyl-[protein] + H2O = L-tyrosyl-[protein] + phosphate. Phosphatase that plays a role in immunity, learning, synaptic plasticity or cell homeostasis. Regulates neuronal cell homeostasis by protecting neurons against apoptosis. Negatively regulates TLR4-induced interferon beta production by dephosphorylating adapter TICAM2 and inhibiting subsequent TRAM-TRIF interaction. Also dephosphorylates the immunoreceptor tyrosine-based activation motifs/ITAMs of the TCR zeta subunit and thereby negatively regulates TCR-mediated signaling pathway. May act at junctions between the membrane and the cytoskeleton. The polypeptide is Tyrosine-protein phosphatase non-receptor type 4 (PTPN4) (Homo sapiens (Human)).